Here is a 130-residue protein sequence, read N- to C-terminus: Large ribosomal subunit protein bL19c (130 aa).

The protein belongs to the bacterial ribosomal protein bL19 family.

It localises to the plastid. It is found in the chloroplast. The sequence is that of Large ribosomal subunit protein bL19c (rpl19) from Chlorella vulgaris (Green alga).